The sequence spans 317 residues: MTSSYKDSSLKVFSLNSNPELANEIATHIGTNLGKCTVSKFSDGEVQINLEESVRGCDVYVVQSTCAPVNQHIMELLIMIDALKRASAKSINIVMPYYGYARQDRKARSREPIAAKLVADLIEKAGANRVITLDLHAPQIQGFFDIPIDHLQGVPILSSYFEQKNLDDVIVVSPDHGGVTRARKMADRLKAPIGIIDKRRPKPNVAEIMNIIGNIEGKTAILIDDIIDTAGTITLAANALIENGAKEVYACCTHPVLSGPAIERIDNSKIKELVITDSIPLPDEKFSTKITALSVAPLIGEAIIRVHEMQSVSILFD.

Residues 43–45 and 102–103 each bind ATP; these read DGE and RQ. Mg(2+) contacts are provided by His136 and Asp175. Lys198 is an active-site residue. D-ribose 5-phosphate contacts are provided by residues Arg200, Asp224, and 228–232; that span reads DTAGT.

Belongs to the ribose-phosphate pyrophosphokinase family. Class I subfamily. As to quaternary structure, homohexamer. It depends on Mg(2+) as a cofactor.

Its subcellular location is the cytoplasm. It catalyses the reaction D-ribose 5-phosphate + ATP = 5-phospho-alpha-D-ribose 1-diphosphate + AMP + H(+). It participates in metabolic intermediate biosynthesis; 5-phospho-alpha-D-ribose 1-diphosphate biosynthesis; 5-phospho-alpha-D-ribose 1-diphosphate from D-ribose 5-phosphate (route I): step 1/1. Involved in the biosynthesis of the central metabolite phospho-alpha-D-ribosyl-1-pyrophosphate (PRPP) via the transfer of pyrophosphoryl group from ATP to 1-hydroxyl of ribose-5-phosphate (Rib-5-P). This is Ribose-phosphate pyrophosphokinase from Oceanobacillus iheyensis (strain DSM 14371 / CIP 107618 / JCM 11309 / KCTC 3954 / HTE831).